Here is a 728-residue protein sequence, read N- to C-terminus: Rho-related BTB domain-containing protein 2 (728 aa).

Residues 1–210 (MDSDMDYERP…DNAIRAALIS (210 aa)) are rho-like. Residues 21-28 (GDNAVGKT), 84-88 (DTFGD), and 140-143 (CQLD) each bind GTP. BTB domains follow at residues 266 to 333 (ADVI…HHHH) and 500 to 567 (SDVT…TSSP). Residues 304-313 (ELGGPSGSGG) show a composition bias toward gly residues. The segment at 304–333 (ELGGPSGSGGPRPEDHRSHPEQHHHHHHHH) is disordered. Residues 315–324 (RPEDHRSHPE) are compositionally biased toward basic and acidic residues. A disordered region spans residues 703-728 (FWNSPSSPSSSAAGSASPSSSSSAVV). Over residues 706–728 (SPSSPSSSAAGSASPSSSSSAVV) the composition is skewed to low complexity.

Belongs to the small GTPase superfamily. Rho family. As to quaternary structure, interacts with HSP90AA1 and HSP90AB1. Forms a complex with CUL3 and RBX1. Interacts (via BTB 1 domain) with CUL3. Interacts with MSI2. Post-translationally, autoubiquitinated by RHOBTB2-CUL3-RBX1 ubiquitin ligase complex. In terms of tissue distribution, expressed in most tissues, with highest expression in brain.

In terms of biological role, regulator of cell proliferation and apoptosis. It likely functions as a substrate-adapter that recruits key substrates, e.g. MSI2, to CUL3-based ubiquitin ligase complexes for degradation. Required for MSI2 ubiquitination and degradation. The chain is Rho-related BTB domain-containing protein 2 (Rhobtb2) from Mus musculus (Mouse).